The sequence spans 208 residues: Methylthioribulose-1-phosphate dehydratase (208 aa).

Positions 101 and 103 each coordinate Zn(2+).

Belongs to the aldolase class II family. MtnB subfamily. Zn(2+) is required as a cofactor.

The catalysed reaction is 5-(methylsulfanyl)-D-ribulose 1-phosphate = 5-methylsulfanyl-2,3-dioxopentyl phosphate + H2O. It participates in amino-acid biosynthesis; L-methionine biosynthesis via salvage pathway; L-methionine from S-methyl-5-thio-alpha-D-ribose 1-phosphate: step 2/6. Catalyzes the dehydration of methylthioribulose-1-phosphate (MTRu-1-P) into 2,3-diketo-5-methylthiopentyl-1-phosphate (DK-MTP-1-P). The polypeptide is Methylthioribulose-1-phosphate dehydratase (Gluconobacter oxydans (strain 621H) (Gluconobacter suboxydans)).